Here is a 233-residue protein sequence, read N- to C-terminus: ATP synthase subunit a (233 aa).

Helical transmembrane passes span 27–47 (ANFV…FAIL), 85–105 (YLAF…IGVV), 114–134 (VPSV…IVGV), 143–163 (LAHF…IELV), 189–209 (VFLK…HVFV), and 210–230 (SFLQ…GAVA).

It belongs to the ATPase A chain family. As to quaternary structure, F-type ATPases have 2 components, CF(1) - the catalytic core - and CF(0) - the membrane proton channel. CF(1) has five subunits: alpha(3), beta(3), gamma(1), delta(1), epsilon(1). CF(0) has three main subunits: a(1), b(2) and c(9-12). The alpha and beta chains form an alternating ring which encloses part of the gamma chain. CF(1) is attached to CF(0) by a central stalk formed by the gamma and epsilon chains, while a peripheral stalk is formed by the delta and b chains.

It is found in the cell inner membrane. In terms of biological role, key component of the proton channel; it plays a direct role in the translocation of protons across the membrane. The protein is ATP synthase subunit a of Solibacter usitatus (strain Ellin6076).